Consider the following 427-residue polypeptide: 3-phosphoshikimate 1-carboxyvinyltransferase (427 aa).

3-phosphoshikimate-binding residues include lysine 22, serine 23, and arginine 27. Lysine 22 contacts phosphoenolpyruvate. 2 residues coordinate phosphoenolpyruvate: glycine 96 and arginine 124. Residues serine 170, serine 171, glutamine 172, serine 198, aspartate 314, asparagine 337, and lysine 341 each coordinate 3-phosphoshikimate. Glutamine 172 is a phosphoenolpyruvate binding site. Catalysis depends on aspartate 314, which acts as the Proton acceptor. Phosphoenolpyruvate-binding residues include arginine 345, arginine 387, and lysine 412.

Belongs to the EPSP synthase family. In terms of assembly, monomer.

The protein resides in the cytoplasm. It catalyses the reaction 3-phosphoshikimate + phosphoenolpyruvate = 5-O-(1-carboxyvinyl)-3-phosphoshikimate + phosphate. The protein operates within metabolic intermediate biosynthesis; chorismate biosynthesis; chorismate from D-erythrose 4-phosphate and phosphoenolpyruvate: step 6/7. Catalyzes the transfer of the enolpyruvyl moiety of phosphoenolpyruvate (PEP) to the 5-hydroxyl of shikimate-3-phosphate (S3P) to produce enolpyruvyl shikimate-3-phosphate and inorganic phosphate. The protein is 3-phosphoshikimate 1-carboxyvinyltransferase of Tolumonas auensis (strain DSM 9187 / NBRC 110442 / TA 4).